A 769-amino-acid chain; its full sequence is MNDSPIISVVLPFLIKDNDDKSLNYQGINNLIISIDSIIEQTFKEWELILVDDGSNNEILEQLLSKRYSTDNRIKFIINKENKGIVKSLNDAILNHCSPTSKYIARMDSDDISHPTRLQSQLKYLQSNETIDILGCPIKMFNNNKLIEILNNNNNNNNINNNVKELINIINNEESFKFIQHPDKDILMWSMFFNCCIVHPSVIFKRSIFTIEHCYEENNQFPFIEDYLFWLKSLIMKGLNISNIQSSTPLLYLRKHNNSISFKNIEKQKDSTANASCYYLNILFKRFNIDSEIIQNSSLSMKEIIQFFQLSPSSLSKINNISIELFEFAFKYLELIEKSCTKQQPNYSNSIKDAANEKMGELVSLCLSNYPNNQKSSLLWEKWLSRNPTSQLLSLLSNLNVKSSTTIINNNINNNNNNNNNNNNNNNNNNNNNNNNNNNNNSILNFISGINSNKINTPKSNNNKFKENGIRIICFSKDRAFQLKEYLRTFFKYLKNDDNGNDKFEIIVDVLFTYSNEKFKNSYQLVIESFPQVNFIKEENFTDQLINLVQKTNKLEYVMFSVDDILYYNEFNLKEYCLSLNSEPLALGFYMKLNKNITYCHTCNQDITIPLNSNTISRTENNFKYLKWNRNDNDCKKDWNYPWDLCSTIYRCNDIDSIINGIVKYYGIRNGINHPNRFEFNGNRPIIQKQIYQNKPYCLCLSDHYSPMSVVTINRVQDVYDNPIYDQTLSLDDLDQLLYSNKSLNDEKYKENSLSLNFKSVHIGELFIS.

The segment at Tyr25 to Thr210 is N-acetylgalactosamine 3-beta-galactosyltransferase. Residues Asn410–Asn441 show a composition bias toward low complexity. The segment at Asn410–Ser442 is disordered. The segment at Ser442–Ser769 is alpha-1,2-fucosyltransferase.

Belongs to the glycosyltransferase 2 family.

The catalysed reaction is an N-acetyl-beta-D-glucosaminyl derivative + UDP-alpha-D-galactose = a beta-D-galactosyl-(1-&gt;3)-N-acetyl-beta-D-glucosaminyl derivative + UDP + H(+). It carries out the reaction a beta-D-galactosyl-(1-&gt;3)-N-acetyl-beta-D-glucosaminyl derivative + GDP-beta-L-fucose = an alpha-L-Fuc-(1-&gt;2)-beta-D-Gal-(1-&gt;3)-beta-D-GlcNAc derivative + GDP + H(+). Bifunctional protein composed of 2 glycosyltransferase domains involved in glycosylating skp1. The N-terminal part catalyzes the transfer of a galactose residue to GlcNAc-skp1 in a beta 1-3 linkage. The C-terminal part catalyzes the transfer of a fucose residue to Gal-GlcNAc-skp1 in an alpha 1-2 linkage. This is Bifunctional glycosyltransferase pgtA (pgtA) from Dictyostelium discoideum (Social amoeba).